A 339-amino-acid chain; its full sequence is Phenylalanine--tRNA ligase alpha subunit (339 aa).

Position 254 (glutamate 254) interacts with Mg(2+).

It belongs to the class-II aminoacyl-tRNA synthetase family. Phe-tRNA synthetase alpha subunit type 1 subfamily. Tetramer of two alpha and two beta subunits. It depends on Mg(2+) as a cofactor.

It localises to the cytoplasm. It catalyses the reaction tRNA(Phe) + L-phenylalanine + ATP = L-phenylalanyl-tRNA(Phe) + AMP + diphosphate + H(+). The protein is Phenylalanine--tRNA ligase alpha subunit of Lachnoclostridium phytofermentans (strain ATCC 700394 / DSM 18823 / ISDg) (Clostridium phytofermentans).